The following is a 314-amino-acid chain: Mitochondrial translation factor 2 (314 aa).

A disordered region spans residues 111–136 (ENSSNIYDPSSPPDSPRKQQTHLGTI).

As to quaternary structure, component of the MRH5C complex, composed of mrh5, ppr4, mtf2, and sls1. Proteins mtf2 and sls1 form a subcomplex that serves as a scaffold to bring mrh5 and ppr4 together. The MRH5C complex associates with the small subunit of the mitochondrial ribosome.

Functionally, translation activation factor that as part of the MRH5C complex specifically recruits cox1 mRNA to the mitochondrial ribosome for translation initiation. The chain is Mitochondrial translation factor 2 from Schizosaccharomyces pombe (strain 972 / ATCC 24843) (Fission yeast).